The chain runs to 205 residues: Protease (205 aa).

Catalysis depends on residues His-55, Asp-72, and Cys-122.

This sequence belongs to the peptidase C5 family. Interacts with protease cofactor pVI-C; this interaction is necessary for protease activation.

The protein resides in the virion. It localises to the host nucleus. It carries out the reaction Cleaves proteins of the adenovirus and its host cell at two consensus sites: -Yaa-Xaa-Gly-Gly-|-Xaa- and -Yaa-Xaa-Gly-Xaa-|-Gly- (in which Yaa is Met, Ile or Leu, and Xaa is any amino acid).. With respect to regulation, requires DNA and protease cofactor for maximal activation. Inside nascent virions, becomes partially activated by binding to the viral DNA, allowing it to cleave the cofactor that binds to the protease and fully activates it. Actin, like the viral protease cofactor, seems to act as a cofactor in the cleavage of cytokeratin 18 and of actin itself. Cleaves viral precursor proteins (pTP, pIIIa, pVI, pVII, pVIII, and pX) inside newly assembled particles giving rise to mature virions. Protease complexed to its cofactor slides along the viral DNA to specifically locate and cleave the viral precursors. Mature virions have a weakened organization compared to the unmature virions, thereby facilitating subsequent uncoating. Without maturation, the particle lacks infectivity and is unable to uncoat. Late in adenovirus infection, in the cytoplasm, may participate in the cytoskeleton destruction. Cleaves host cell cytoskeletal keratins K7 and K18. This is Protease from Galliformes (FAdV-8).